Here is a 437-residue protein sequence, read N- to C-terminus: Minor fimbrial subunit HifE (437 aa).

The signal sequence occupies residues 1-30; sequence MNKKSYINHYLTLFKVTTLLFTLSSNPVWA.

This sequence belongs to the fimbrial protein family.

Its subcellular location is the fimbrium. Its function is as follows. May be a minor structural protein required for pilus biogenesis. May be the adhesive component in the pili. This Haemophilus influenzae protein is Minor fimbrial subunit HifE (hifE).